Here is a 279-residue protein sequence, read N- to C-terminus: Small ribosomal subunit protein uS3 (279 aa).

Residues 17-86 (VDEYFLEKLE…NPQIDVQEVK (70 aa)) enclose the KH type-2 domain. 2 stretches are compositionally biased toward low complexity: residues 206-233 (AEKK…STAA) and 241-252 (ESEAAEAVTPEG). The interval 206-279 (AEKKSPAAGA…VVKTDGDSQS (74 aa)) is disordered.

Belongs to the universal ribosomal protein uS3 family. In terms of assembly, part of the 30S ribosomal subunit.

Functionally, binds the lower part of the 30S subunit head. This Methanocella arvoryzae (strain DSM 22066 / NBRC 105507 / MRE50) protein is Small ribosomal subunit protein uS3.